Consider the following 78-residue polypeptide: Large ribosomal subunit protein bL28 (78 aa).

The tract at residues 1-24 (MSQVCQVTGKRPVTGNNVSHSQRK) is disordered.

It belongs to the bacterial ribosomal protein bL28 family.

The chain is Large ribosomal subunit protein bL28 from Chromohalobacter salexigens (strain ATCC BAA-138 / DSM 3043 / CIP 106854 / NCIMB 13768 / 1H11).